The chain runs to 1181 residues: Lysine-specific demethylase hairless (1181 aa).

A compositionally biased stretch (pro residues) spans 311-323; that stretch reads TPRCPSPGPPTPP. Disordered regions lie at residues 311–378, 413–472, and 509–543; these read TPRC…HTKL, AGSP…DGRI, and SHSQKSHKLPLEEKPLEEDSCATSEEGGGSSPEAS. Low complexity predominate over residues 347–357; sequence SPEGSSSGPGE. Polar residues predominate over residues 447 to 461; it reads TPETSTGSKAEAQQQ. A compositionally biased stretch (basic and acidic residues) spans 462–472; it reads EEQRGPRDGRI. The short motif at 560–564 is the LXXLL motif 1 element; that stretch reads LCRLL. Residues 594-619 form a C6-type zinc finger; the sequence is CSRCHHGLFNTHWRCSHCSHRLCVAC. Residues 696–745 are disordered; that stretch reads GDGGQQKEPTEKTPPAPQLSCNGDSNRTKDIKEETPDSTESPAEDRAGRS. The span at 721-730 shows a compositional bias: basic and acidic residues; the sequence is NRTKDIKEET. An LXXLL motif 2 motif is present at residues 752–756; that stretch reads LCELL. Positions 938 to 1149 constitute a JmjC domain; the sequence is DESRVENLAS…LSAQLCHQGA (212 aa). Fe cation contacts are provided by Cys-999, Glu-1001, and His-1117.

Fe(2+) is required as a cofactor.

The protein localises to the nucleus. It catalyses the reaction N(6),N(6)-dimethyl-L-lysyl(9)-[histone H3] + 2 2-oxoglutarate + 2 O2 = L-lysyl(9)-[histone H3] + 2 formaldehyde + 2 succinate + 2 CO2. Functionally, histone demethylase that specifically demethylates both mono- and dimethylated 'Lys-9' of histone H3. May act as a transcription regulator controlling hair biology (via targeting of collagens), neural activity, and cell cycle. The sequence is that of Lysine-specific demethylase hairless (Hr) from Rattus norvegicus (Rat).